Consider the following 640-residue polypeptide: Tyrosine--tRNA ligase, mitochondrial (640 aa).

L-tyrosine is bound at residue Y100. D104 is an ATP binding site. The 'HIGH' region motif lies at 105–114 (PTAPSLHIGH). L-tyrosine contacts are provided by D144, Y248, Q252, D255, and Q274. Residues 322–326 (KFGKS) carry the 'KMSKS' region motif. Residue K325 participates in ATP binding.

It belongs to the class-I aminoacyl-tRNA synthetase family.

Its subcellular location is the mitochondrion matrix. The enzyme catalyses tRNA(Tyr) + L-tyrosine + ATP = L-tyrosyl-tRNA(Tyr) + AMP + diphosphate + H(+). Has both an aminoacyl-tRNA synthetase activity and is involved in the splicing of group I introns. The chain is Tyrosine--tRNA ligase, mitochondrial (YTS1) from Podospora anserina (Pleurage anserina).